Here is a 124-residue protein sequence, read N- to C-terminus: UPF0212 protein Hlac_0869 (124 aa).

The protein belongs to the UPF0212 family.

This is UPF0212 protein Hlac_0869 from Halorubrum lacusprofundi (strain ATCC 49239 / DSM 5036 / JCM 8891 / ACAM 34).